The primary structure comprises 255 residues: tRNA (guanine-N(1)-)-methyltransferase (255 aa).

S-adenosyl-L-methionine-binding positions include G121 and 141 to 146 (IGDYVL). The segment at 236-255 (PVKAPNRAGRQKTPKNKTDG) is disordered. The span at 244–255 (GRQKTPKNKTDG) shows a compositional bias: basic residues.

Belongs to the RNA methyltransferase TrmD family. As to quaternary structure, homodimer.

It localises to the cytoplasm. The catalysed reaction is guanosine(37) in tRNA + S-adenosyl-L-methionine = N(1)-methylguanosine(37) in tRNA + S-adenosyl-L-homocysteine + H(+). Specifically methylates guanosine-37 in various tRNAs. This Bradyrhizobium diazoefficiens (strain JCM 10833 / BCRC 13528 / IAM 13628 / NBRC 14792 / USDA 110) protein is tRNA (guanine-N(1)-)-methyltransferase.